We begin with the raw amino-acid sequence, 364 residues long: Methylthioribose-1-phosphate isomerase (364 aa).

Substrate contacts are provided by residues 53–55 (RGA), Arg-90, and Gln-203. Catalysis depends on Asp-244, which acts as the Proton donor. 254–255 (NK) contributes to the substrate binding site.

This sequence belongs to the eIF-2B alpha/beta/delta subunits family. MtnA subfamily.

It carries out the reaction 5-(methylsulfanyl)-alpha-D-ribose 1-phosphate = 5-(methylsulfanyl)-D-ribulose 1-phosphate. It functions in the pathway amino-acid biosynthesis; L-methionine biosynthesis via salvage pathway; L-methionine from S-methyl-5-thio-alpha-D-ribose 1-phosphate: step 1/6. Catalyzes the interconversion of methylthioribose-1-phosphate (MTR-1-P) into methylthioribulose-1-phosphate (MTRu-1-P). The polypeptide is Methylthioribose-1-phosphate isomerase (Sinorhizobium medicae (strain WSM419) (Ensifer medicae)).